A 1770-amino-acid polypeptide reads, in one-letter code: Transposon Ty2-OR1 Gag-Pol polyprotein (1770 aa).

2 stretches are compositionally biased toward polar residues: residues 1–39 and 49–60; these read MESQ…SASN and KVNSQQETTPGT. 2 disordered regions span residues 1–88 and 359–449; these read MESQ…YQQH and QHSE…SNDE. An RNA-binding region spans residues 295 to 397; the sequence is ENNINVSDRL…SSKPRAAKAH (103 aa). Low complexity predominate over residues 369-381; sequence TSPNTTNTKVTTR. Polar residues-rich tracts occupy residues 399 to 408 and 415 to 435; these read IATSSKFSRV and ESTV…GQQQ. Catalysis depends on Asp457, which acts as the For protease activity; shared with dimeric partner. Residues 579–636 form an integrase-type zinc finger-like region; that stretch reads NVNKSKSVNKYPYPLIHRMLGHANFRSIQKSLKKNAVTYLKESDIEWSNASTYQCPDC. Positions 656-831 constitute an Integrase catalytic domain; that stretch reads ESYEPFQYLH…AGLDITTILP (176 aa). The Mg(2+) site is built by Asp667 and Asp732. 3 stretches are compositionally biased toward polar residues: residues 916–929, 1009–1024, and 1065–1082; these read FIEQ…YDQN, ESDT…FTAR, and QRNS…STPS. Disordered regions lie at residues 916-935, 1005-1038, and 1057-1205; these read FIEQ…SDHD, GGTI…MIDL, and GGTE…TEIE. Residues 1193-1227 carry the Bipartite nuclear localization signal motif; sequence KKRSLEDNETEIEVSRDTWNNKNMRSLEPPRSKKR. The Reverse transcriptase Ty1/copia-type domain occupies 1353–1491; that stretch reads NDYYITQLDI…DILGLEIKYQ (139 aa). Positions 1361, 1442, 1443, 1625, 1667, and 1700 each coordinate Mg(2+). One can recognise an RNase H Ty1/copia-type domain in the interval 1625–1767; it reads DASYGNQPYY…IKTFKLLTNK (143 aa).

In terms of assembly, the capsid protein forms a homotrimer, from which the VLPs are assembled. The protease is a homodimer, whose active site consists of two apposed aspartic acid residues. Initially, virus-like particles (VLPs) are composed of the structural unprocessed proteins Gag and Gag-Pol, and also contain the host initiator methionine tRNA (tRNA(i)-Met) which serves as a primer for minus-strand DNA synthesis, and a dimer of genomic Ty RNA. Processing of the polyproteins occurs within the particle and proceeds by an ordered pathway, called maturation. First, the protease (PR) is released by autocatalytic cleavage of the Gag-Pol polyprotein, and this cleavage is a prerequisite for subsequent processing at the remaining sites to release the mature structural and catalytic proteins. Maturation takes place prior to the RT reaction and is required to produce transposition-competent VLPs.

Its subcellular location is the cytoplasm. It localises to the nucleus. The enzyme catalyses DNA(n) + a 2'-deoxyribonucleoside 5'-triphosphate = DNA(n+1) + diphosphate. It catalyses the reaction Endonucleolytic cleavage to 5'-phosphomonoester.. Its function is as follows. Capsid protein (CA) is the structural component of the virus-like particle (VLP), forming the shell that encapsulates the retrotransposons dimeric RNA genome. The particles are assembled from trimer-clustered units and there are holes in the capsid shells that allow for the diffusion of macromolecules. CA also has nucleocapsid-like chaperone activity, promoting primer tRNA(i)-Met annealing to the multipartite primer-binding site (PBS), dimerization of Ty2 RNA and initiation of reverse transcription. Functionally, the aspartyl protease (PR) mediates the proteolytic cleavages of the Gag and Gag-Pol polyproteins after assembly of the VLP. In terms of biological role, reverse transcriptase/ribonuclease H (RT) is a multifunctional enzyme that catalyzes the conversion of the retro-elements RNA genome into dsDNA within the VLP. The enzyme displays a DNA polymerase activity that can copy either DNA or RNA templates, and a ribonuclease H (RNase H) activity that cleaves the RNA strand of RNA-DNA heteroduplexes during plus-strand synthesis and hydrolyzes RNA primers. The conversion leads to a linear dsDNA copy of the retrotransposon that includes long terminal repeats (LTRs) at both ends. Integrase (IN) targets the VLP to the nucleus, where a subparticle preintegration complex (PIC) containing at least integrase and the newly synthesized dsDNA copy of the retrotransposon must transit the nuclear membrane. Once in the nucleus, integrase performs the integration of the dsDNA into the host genome. The chain is Transposon Ty2-OR1 Gag-Pol polyprotein (TY2B-OR1) from Saccharomyces cerevisiae (strain ATCC 204508 / S288c) (Baker's yeast).